The chain runs to 226 residues: Protein TRI1 (226 aa).

A DEK-C domain is found at 1-56; the sequence is MADINKYIPMVDAILSVSNPDEISPKRVRKALQILYSVNLDSQRKLINELILERFG. The segment at 83–118 is disordered; sequence QKEEERPLRSTRKRKGKSESKSKRKKKKNDSPDSNS. Positions 91-110 are enriched in basic residues; the sequence is RSTRKRKGKSESKSKRKKKK. Position 113 is a phosphoserine (serine 113). The 77-residue stretch at 119–195 folds into the SWIB/MDM2 domain; sequence ISVRKVLLSA…NKLLTKHLFN (77 aa). The span at 200–218 shows a compositional bias: basic and acidic residues; sequence VKHEEEQKQTPEKEIKLEN. The interval 200–226 is disordered; the sequence is VKHEEEQKQTPEKEIKLENESLPNLSG. Glycyl lysine isopeptide (Lys-Gly) (interchain with G-Cter in SUMO) cross-links involve residues lysine 201 and lysine 215. At serine 225 the chain carries Phosphoserine.

The protein localises to the cytoplasm. Its subcellular location is the nucleus. It localises to the nucleolus. May be involved in transcription regulation. In Saccharomyces cerevisiae (strain ATCC 204508 / S288c) (Baker's yeast), this protein is Protein TRI1 (TRI1).